Reading from the N-terminus, the 209-residue chain is ATP-dependent Clp protease proteolytic subunit (209 aa).

Ser106 (nucleophile) is an active-site residue. His131 is an active-site residue.

The protein belongs to the peptidase S14 family. Fourteen ClpP subunits assemble into 2 heptameric rings which stack back to back to give a disk-like structure with a central cavity, resembling the structure of eukaryotic proteasomes.

The protein resides in the cytoplasm. It carries out the reaction Hydrolysis of proteins to small peptides in the presence of ATP and magnesium. alpha-casein is the usual test substrate. In the absence of ATP, only oligopeptides shorter than five residues are hydrolyzed (such as succinyl-Leu-Tyr-|-NHMec, and Leu-Tyr-Leu-|-Tyr-Trp, in which cleavage of the -Tyr-|-Leu- and -Tyr-|-Trp bonds also occurs).. In terms of biological role, cleaves peptides in various proteins in a process that requires ATP hydrolysis. Has a chymotrypsin-like activity. Plays a major role in the degradation of misfolded proteins. This is ATP-dependent Clp protease proteolytic subunit from Brucella suis biovar 1 (strain 1330).